We begin with the raw amino-acid sequence, 508 residues long: Ras association domain-containing protein 10 (508 aa).

The region spanning 1 to 133 is the Ras-associating domain; that stretch reads MDPSEKKISV…VRFVLVRSEA (133 aa). Disordered regions lie at residues 51 to 81 and 186 to 221; these read RRGLTEDPSGQLELPEPPDENDEDDDDAMPP and KLNRRRQQQPSSPCSSTSSSTASSCSSSARTHESAS. Over residues 66–78 the composition is skewed to acidic residues; the sequence is EPPDENDEDDDDA. Low complexity predominate over residues 195–214; the sequence is PSSPCSSTSSSTASSCSSSA. 2 coiled-coil regions span residues 235–266 and 319–358; these read QDHTIRQQVQRLRELDREIDRYEAKVHLDRMR and LEELARRCDDLVRLQEERAQQEELLERLSAEIQEELNQRW. A disordered region spans residues 473-508; it reads GLAKSCPGNDEDSDTGLSSMHSQDSDSVPPVCESLV. A compositionally biased stretch (polar residues) spans 487–498; sequence TGLSSMHSQDSD.

As to expression, expressed in neural progenitor cells (at protein level).

It is found in the cytoplasm. The protein localises to the cytosol. Its subcellular location is the cytoskeleton. The protein resides in the microtubule organizing center. It localises to the centrosome. It is found in the spindle pole. In terms of biological role, plays an important role in regulating embryonic neurogenesis. The polypeptide is Ras association domain-containing protein 10 (Rassf10) (Mus musculus (Mouse)).